Here is a 460-residue protein sequence, read N- to C-terminus: Bifunctional protein GlmU (460 aa).

The segment at 1 to 230 (MSNNYAIILA…FDESLGVNDR (230 aa)) is pyrophosphorylase. Residues 9–12 (LAAG), K23, Q73, and 78–79 (GT) each bind UDP-N-acetyl-alpha-D-glucosamine. D103 provides a ligand contact to Mg(2+). The UDP-N-acetyl-alpha-D-glucosamine site is built by G140, E155, N170, and N228. N228 serves as a coordination point for Mg(2+). A linker region spans residues 231-251 (VALATAEAVMRKRINEKHMVN). An N-acetyltransferase region spans residues 252–460 (GVTFINPDAT…TRFPFHPSQK (209 aa)). Positions 333 and 351 each coordinate UDP-N-acetyl-alpha-D-glucosamine. The active-site Proton acceptor is the H363. Positions 366 and 377 each coordinate UDP-N-acetyl-alpha-D-glucosamine. Acetyl-CoA contacts are provided by residues A380, 386–387 (NY), S405, A423, and R440.

It in the N-terminal section; belongs to the N-acetylglucosamine-1-phosphate uridyltransferase family. In the C-terminal section; belongs to the transferase hexapeptide repeat family. As to quaternary structure, homotrimer. The cofactor is Mg(2+).

The protein resides in the cytoplasm. It catalyses the reaction alpha-D-glucosamine 1-phosphate + acetyl-CoA = N-acetyl-alpha-D-glucosamine 1-phosphate + CoA + H(+). The catalysed reaction is N-acetyl-alpha-D-glucosamine 1-phosphate + UTP + H(+) = UDP-N-acetyl-alpha-D-glucosamine + diphosphate. It functions in the pathway nucleotide-sugar biosynthesis; UDP-N-acetyl-alpha-D-glucosamine biosynthesis; N-acetyl-alpha-D-glucosamine 1-phosphate from alpha-D-glucosamine 6-phosphate (route II): step 2/2. Its pathway is nucleotide-sugar biosynthesis; UDP-N-acetyl-alpha-D-glucosamine biosynthesis; UDP-N-acetyl-alpha-D-glucosamine from N-acetyl-alpha-D-glucosamine 1-phosphate: step 1/1. The protein operates within bacterial outer membrane biogenesis; LPS lipid A biosynthesis. Functionally, catalyzes the last two sequential reactions in the de novo biosynthetic pathway for UDP-N-acetylglucosamine (UDP-GlcNAc). The C-terminal domain catalyzes the transfer of acetyl group from acetyl coenzyme A to glucosamine-1-phosphate (GlcN-1-P) to produce N-acetylglucosamine-1-phosphate (GlcNAc-1-P), which is converted into UDP-GlcNAc by the transfer of uridine 5-monophosphate (from uridine 5-triphosphate), a reaction catalyzed by the N-terminal domain. The sequence is that of Bifunctional protein GlmU from Streptococcus suis (strain 98HAH33).